The sequence spans 230 residues: Early E1A protein (230 aa).

The segment at P40–L48 is interaction with RB1 in competition with E2F1. The LXCXE motif, interaction with host RB1 signature appears at L106–E110. A zinc finger lies at C145–C163. Residues K189–Q230 are disordered. The PXDLS motif, CTBP-binding signature appears at P220 to S224. Residues K226–Q230 carry the Nuclear localization signal motif.

This sequence belongs to the adenoviridae E1A protein family. As to quaternary structure, interacts with host UBE2I; this interaction interferes with polySUMOylation. Interacts with host RB1; this interaction induces the aberrant dissociation of RB1-E2F1 complex thereby disrupting the activity of RB1 and activating E2F1-regulated genes. Interacts with host ATF7; the interaction enhances ATF7-mediated viral transactivation activity which requires the zinc binding domains of both proteins. Isoform early E1A 32 kDa protein and isoform early E1A 26 kDa protein interact (via N-terminus) with CUL1 and E3 ubiquitin ligase RBX1; these interactions inhibit RBX1-CUL1-dependent elongation reaction of ubiquitin chains and attenuate ubiquitination of SCF(FBXW7) target proteins. Interacts (via PXLXP motif) with host ZMYND11/BS69 (via MYND-type zinc finger); this interaction inhibits E1A mediated transactivation. Interacts with host EP300; this interaction stimulates the acetylation of RB1 by recruiting EP300 and RB1 into a multimeric-protein complex. Interacts with host CTBP1 and CTBP2; this interaction seems to potentiate viral replication. Interacts with host DCAF7. Interacts with host DYRK1A. Interacts with host KPNA4; this interaction allows E1A import into the host nucleus. Interacts with host EP400; this interaction stabilizes MYC. Interacts with host TBP protein; this interaction probably disrupts the TBP-TATA complex.

Its subcellular location is the host nucleus. Its function is as follows. Plays a role in viral genome replication by driving entry of quiescent cells into the cell cycle. Stimulation of progression from G1 to S phase allows the virus to efficiently use the cellular DNA replicating machinery to achieve viral genome replication. E1A protein has both transforming and trans-activating activities. Induces the disassembly of the E2F1 transcription factor from RB1 by direct competition for the same binding site on RB1, with subsequent transcriptional activation of E2F1-regulated S-phase genes and of the E2 region of the adenoviral genome. Release of E2F1 leads to the ARF-mediated inhibition of MDM2 and causes TP53/p53 to accumulate because it is not targeted for degradation by MDM2-mediated ubiquitination anymore. This increase in TP53, in turn, would arrest the cell proliferation and direct its death but this effect is counteracted by the viral protein E1B-55K. Inactivation of the ability of RB1 to arrest the cell cycle is critical for cellular transformation, uncontrolled cellular growth and proliferation induced by viral infection. Interaction with RBX1 and CUL1 inhibits ubiquitination of the proteins targeted by SCF(FBXW7) ubiquitin ligase complex, and may be linked to unregulated host cell proliferation. The tumorigenesis-restraining activity of E1A may be related to the disruption of the host CtBP-CtIP complex through the CtBP binding motif. The chain is Early E1A protein from Canine adenovirus serotype 1 (strain CLL) (CAdV-1).